A 263-amino-acid polypeptide reads, in one-letter code: LIM and SH3 domain protein 1 (263 aa).

The residue at position 1 (M1) is an N-acetylmethionine. The LIM zinc-binding domain occupies 3 to 63; it reads PNCARCGKIV…NAHYPKQSFT (61 aa). K42 is subject to N6-acetyllysine. Nebulin repeat units lie at residues 64–95 and 97–131; these read MVAD…KNKG and GFSV…KSRM. Residue T68 is modified to Phosphothreonine. At K75 the chain carries N6-methyllysine. The residue at position 99 (S99) is a Phosphoserine. T104 is modified (phosphothreonine). K112 carries the N6-succinyllysine modification. Phosphoserine occurs at positions 118 and 134. Positions 122–207 are disordered; the sequence is YHEEFEKSRM…QRSAPGGGGK (86 aa). A compositionally biased stretch (polar residues) spans 148–162; sequence DSSSYRRPTEQQQPQ. Residues 204 to 263 enclose the SH3 domain; it reads GGGKRYRAVYDYSAADEDEVSFQDGDTIVNVQQIDDGWMYGTVERTGDTGMLPANYVEAI.

In terms of assembly, interacts with F-actin. Interacts with ANKRD54. Interacts with KBTBD10. Post-translationally, phosphorylated. In terms of tissue distribution, expressed in a wide range of tissues (but not the heart or skeletal muscle), the expression is specific for certain actin-rich cell types within these tissues. Expression is prominent in the cortical regions of ion-transporting duct cells in the pancreas, in the salivary parotid gland and in certain F-actin-rich cells in the distal tubule/collecting duct. In primary cultures of gastric fibroblasts, expression is mainly within the tips of lamellipodia and at the leading edges of membrane ruffles.

Its subcellular location is the cytoplasm. It localises to the cell cortex. The protein resides in the cytoskeleton. Its function is as follows. Plays an important role in the regulation of dynamic actin-based, cytoskeletal activities. Agonist-dependent changes in LASP1 phosphorylation may also serve to regulate actin-associated ion transport activities, not only in the parietal cell but also in certain other F-actin-rich secretory epithelial cell types. This chain is LIM and SH3 domain protein 1, found in Rattus norvegicus (Rat).